The chain runs to 65 residues: Photosystem II reaction center protein Z (65 aa).

Transmembrane regions (helical) follow at residues leucine 11–alanine 31 and tryptophan 44–phenylalanine 64.

This sequence belongs to the PsbZ family. PSII is composed of 1 copy each of membrane proteins PsbA, PsbB, PsbC, PsbD, PsbE, PsbF, PsbH, PsbI, PsbJ, PsbK, PsbL, PsbM, PsbT, PsbY, PsbZ, Psb30/Ycf12, at least 3 peripheral proteins of the oxygen-evolving complex and a large number of cofactors. It forms dimeric complexes.

It localises to the plastid. The protein resides in the chloroplast thylakoid membrane. In terms of biological role, may control the interaction of photosystem II (PSII) cores with the light-harvesting antenna, regulates electron flow through the 2 photosystem reaction centers. PSII is a light-driven water plastoquinone oxidoreductase, using light energy to abstract electrons from H(2)O, generating a proton gradient subsequently used for ATP formation. This Euglena gracilis protein is Photosystem II reaction center protein Z.